The following is an 85-amino-acid chain: Homeobox protein knotted-1-like 7 (85 aa).

The ELK domain maps to 1–21 (ELKNELKQGYKEKLVDIREEI). A DNA-binding region (homeobox; TALE-type) is located at residues 22–85 (MRKRRAGKLP…NQRKRNWHSN (64 aa)).

It belongs to the TALE/KNOX homeobox family. In terms of tissue distribution, expressed in all tissues examined. Highest expression in leaves.

The protein localises to the nucleus. In Zea mays (Maize), this protein is Homeobox protein knotted-1-like 7 (KNOX7).